We begin with the raw amino-acid sequence, 589 residues long: tRNA (guanine(26)-N(2))-dimethyltransferase 2 (589 aa).

The Trm1 methyltransferase domain occupies 9–465 (TVIKEGEAEI…APMEVIWDIM (457 aa)). Arg36 lines the S-adenosyl-L-methionine pocket. The segment at 51–122 (KQEHEAKSSK…RFAPREPKPP (72 aa)) is disordered. Basic and acidic residues-rich tracts occupy residues 68 to 81 (VIEK…KEET) and 106 to 122 (DPAK…PKPP). 3 residues coordinate S-adenosyl-L-methionine: Arg134, Asp152, and Val185. 4 residues coordinate Zn(2+): Cys315, Cys318, Cys350, and Cys353. The interval 550–589 (LSQHHEELKEEDEEAEPEDNVQDKVDPKRQKTATDNITST) is disordered. The span at 558 to 569 (KEEDEEAEPEDN) shows a compositional bias: acidic residues.

The protein belongs to the class I-like SAM-binding methyltransferase superfamily. Trm1 family.

It catalyses the reaction guanosine(26) in tRNA + 2 S-adenosyl-L-methionine = N(2)-dimethylguanosine(26) in tRNA + 2 S-adenosyl-L-homocysteine + 2 H(+). In terms of biological role, dimethylates a single guanine residue at position 26 of most tRNAs using S-adenosyl-L-methionine as donor of the methyl groups. The chain is tRNA (guanine(26)-N(2))-dimethyltransferase 2 from Arabidopsis thaliana (Mouse-ear cress).